Reading from the N-terminus, the 265-residue chain is Apolipoprotein A-I (265 aa).

A signal peptide spans 1–18 (MKAVVLTLAVLFLTGSQA). 2 repeat units span residues 67–88 (LKLL…EQLG) and 89–110 (PVTQ…QEMS). The segment at 67–265 (LKLLDNWDSL…DEASKKLNAQ (199 aa)) is 10 X approximate tandem repeats. A Methionine sulfoxide modification is found at methionine 109. The 3; half-length repeat unit spans residues 111 to 121 (KDLEEVKKKVQ). 5 repeat units span residues 122–142 (PYLD…RQKM), 144–165 (PLGA…EKLS), 166–187 (PLAE…QHVA), 188–209 (PYSD…EGGG), and 210–230 (SLAE…EKAK). Methionine 135 carries the methionine sulfoxide modification. The stretch at 231–241 (PALEDLRQGLL) is one 9; half-length repeat. Repeat unit 10 spans residues 242–265 (PVLENLKVSILAAIDEASKKLNAQ).

The protein belongs to the apolipoprotein A1/A4/E family. Homodimer. Interacts with APOA1BP and CLU. Component of a sperm activating protein complex (SPAP), consisting of APOA1, an immunoglobulin heavy chain, an immunoglobulin light chain and albumin. Interacts with NDRG1. Interacts with SCGB3A2. Interacts with NAXE and YJEFN3. In terms of processing, glycosylated. Palmitoylated. Post-translationally, phosphorylation sites are present in the extracellular medium. As to expression, major protein of plasma HDL, also found in chylomicrons. Synthesized predominantly in the intestine and the liver.

The protein resides in the secreted. Its function is as follows. Participates in the reverse transport of cholesterol from tissues to the liver for excretion by promoting cholesterol efflux from tissues and by acting as a cofactor for the lecithin cholesterol acyltransferase (LCAT). As part of the SPAP complex, activates spermatozoa motility. The polypeptide is Apolipoprotein A-I (APOA1) (Sus scrofa (Pig)).